The chain runs to 67 residues: Bowman-Birk type proteinase inhibitor 1 (67 aa).

Disulfide bonds link cysteine 5/cysteine 59, cysteine 6/cysteine 21, cysteine 9/cysteine 55, cysteine 11/cysteine 19, cysteine 29/cysteine 36, cysteine 33/cysteine 48, and cysteine 38/cysteine 46.

The protein belongs to the Bowman-Birk serine protease inhibitor family. Monomer. Although dimerization may occur in solution. As to expression, seed.

In terms of biological role, inhibits trypsin but not chymotrypsin. The inhibitor consists of 2 domains and has 2 sites of interaction with trypsin. This is Bowman-Birk type proteinase inhibitor 1 from Dioclea glabra.